A 356-amino-acid chain; its full sequence is S-adenosylmethionine:tRNA ribosyltransferase-isomerase (356 aa).

This sequence belongs to the QueA family. Monomer.

The protein localises to the cytoplasm. The enzyme catalyses 7-aminomethyl-7-carbaguanosine(34) in tRNA + S-adenosyl-L-methionine = epoxyqueuosine(34) in tRNA + adenine + L-methionine + 2 H(+). It participates in tRNA modification; tRNA-queuosine biosynthesis. Functionally, transfers and isomerizes the ribose moiety from AdoMet to the 7-aminomethyl group of 7-deazaguanine (preQ1-tRNA) to give epoxyqueuosine (oQ-tRNA). The sequence is that of S-adenosylmethionine:tRNA ribosyltransferase-isomerase from Xanthomonas oryzae pv. oryzae (strain KACC10331 / KXO85).